The following is a 295-amino-acid chain: Probable protein phosphatase 2C 5 (295 aa).

Residues 23–294 (QYAATHMQGW…DNMTCILVLF (272 aa)) enclose the PPM-type phosphatase domain. Mn(2+) contacts are provided by D57 and G58. Positions 151–170 (NRDGKPFDMSKDHKPDDDQE) are disordered. Mn(2+) is bound by residues D237 and D285.

Belongs to the PP2C family. It depends on Mg(2+) as a cofactor. Requires Mn(2+) as cofactor.

The protein resides in the membrane. The enzyme catalyses O-phospho-L-seryl-[protein] + H2O = L-seryl-[protein] + phosphate. It catalyses the reaction O-phospho-L-threonyl-[protein] + H2O = L-threonyl-[protein] + phosphate. In terms of biological role, enzyme with a broad specificity. The protein is Probable protein phosphatase 2C 5 of Paramecium tetraurelia.